Consider the following 245-residue polypeptide: 1-(5-phosphoribosyl)-5-[(5-phosphoribosylamino)methylideneamino] imidazole-4-carboxamide isomerase (245 aa).

The active-site Proton acceptor is D10. The active-site Proton donor is D135.

It belongs to the HisA/HisF family.

It is found in the cytoplasm. The catalysed reaction is 1-(5-phospho-beta-D-ribosyl)-5-[(5-phospho-beta-D-ribosylamino)methylideneamino]imidazole-4-carboxamide = 5-[(5-phospho-1-deoxy-D-ribulos-1-ylimino)methylamino]-1-(5-phospho-beta-D-ribosyl)imidazole-4-carboxamide. It functions in the pathway amino-acid biosynthesis; L-histidine biosynthesis; L-histidine from 5-phospho-alpha-D-ribose 1-diphosphate: step 4/9. The polypeptide is 1-(5-phosphoribosyl)-5-[(5-phosphoribosylamino)methylideneamino] imidazole-4-carboxamide isomerase (Methanosarcina barkeri (strain Fusaro / DSM 804)).